A 67-amino-acid polypeptide reads, in one-letter code: Protein AaeX (67 aa).

The next 2 helical transmembrane spans lie at 8-28 (VLFGLSFPPAFFALLAALPLF) and 47-67 (PALFNCALYGCLFYLVSWLFI).

Belongs to the AaeX family.

The protein resides in the cell membrane. In Edwardsiella piscicida, this protein is Protein AaeX.